Reading from the N-terminus, the 1865-residue chain is MVSDAPNSSWHPAMMPNSIADLRNRREDTVPPSAPEGSVLEDNTTQSNTAGEESGAWFQDDGTGDDWLADTNNAPESEPTPAPASAPDTETPEQTGPAESVEEAVPEESSTTSKHLSTMSFTRTVPHEVNWNDDDDAEWSLPRTDTDPFKFIPETNRTNSFPTVSPLEDRAHGAAQEFDHPISFNPAEDLIREIEEEESREDGTLPGAAAESATQNAQDDTTTQQYLTGGPDAVANDALGARFEEGLPLVSSADQDATQEGQQEAGGDLFAEETVGEEDDFFSNVRSDEATQQDDDFQPTPVQRKSTMDVLNSLDMPSTGTGFVPLEETVEEPEAQESPQDQPKAQEGENLDEKWKEMFGDDDAEEGFLPDESTGPNELDASAFLGSDDEGLLEDSETEQQEQSQPLASPGYVSASGPSAQPVNGQYFPHNQGPAVPTPTNPYLPAVSPVTPAHSYLPAAPVSAAQPPTAAPYAPPSTAPPAPALAQFGYGAPPPTQEKNKAQSFVDKKGGYTSPYDLPMEVVKPKRRAGALPLQNNTSGPNSPSTMPPPPRSASMYSQPSPSTGAPTPGTARPASSHSAQAPSSGRKPSHESFFEDLPMTTKPRPASRPKPKSAAPNLVPAAPPVASSRYSPAPPGAPLTNGPAPAPVSSRYSPAPPAPRQPSGGHERSRAHAPVGHVEGSLAERRSSSSLHDHRLQRVPSLPSTREVEEEEVPTQAQASPGGPAPPHPMSPPVSRYAPSPQGARQTPPHTAPSGQTVLSPPKRVMSSHSPLAPPYDFAPPPRSQTQSPGALYGNRATKPVEPIPRPSSVHDPTSPREAAYPAAPASFAPVAPATTYGRPRVPRYGMNQSIPAVIRSPGEVKIQNIKDIIPFEERLAKFPGPLKGKSKKKETIAWLTAGIESLEQGLPTSFSLHTPFSHDDKRAVERVLLWKILRVFVEHDGVLEGNPTVDKAVRDLLSPGLEGADSTTPYVNGGGNFGLADPASAGLQSDGVSSSTVEQIRRQLLSGDHEKAIWAAADQRLWGHALLLSNALAPNLYKQVAQEFIKKEVNSPGRNNESLAALYGVLSGNHEESVDELVPSHARAGLQLVTTHAASSPSKDAMEGLDKWRETLGLILSNRSTDDGRAINSLGVLLSGYGRAEAAHVCFMFARNHTVFGGLDDPASHFVLVGSDHKKQAEQFAKEIEPLLLSEVYEYGQSLAGGFSVPVTNPHLAAYKLQHAIALAEYGFRDKALQYCDAIATAITSQTKRSPYHHPILENAVEDLMMRLKQAPREDSGSWIPKPTMNKVSDTVWSKFNKFVSGDDDGSGQGPTGEGEPGPFSRVAGGTPTISRSPSASNLETFGAAVPSYGMSSSLPNGPVPASAPATRAASRYAPGAPQATGSNSRPSTSAYAPRSSMERTSSELNRGSFEVPRRSLEMQAGHRGSYSPVRSGSPAAMYTPQSTDFGSPQQSPYQPVSHAQPTPFQAPTSAPQPVGYPGPPANGVAPGQESEAPGQSPEASGYQPPSYGYEPPSFTPYEAPTEEKDGTPEETPNGGSYEAPSYQPYSYEPPSYEPDTQPSNEDAGSDDESKPKPKKKGIMYDDDDDFPTPRPAEKSRAEKDRENDEMFRKAAEEDAQRVEAAKQAKKGWGFTSWFGGGGAKKDAATPDSKGANPNKPIRAKLGEANSFYYDPELKRWVNKNAGPEDTAKKATPPPPKAGAPRSVSASPASPPFSPGPGRGASAPPPMGGAGGPPRSASRPPTSSGSTDTTGLPGSPGSVAGGALGPPPGPVAMLRSVSNTSTASAPPLGGGGSGVGGGGGGGPPPSSRPPTSLSNSSSIDDLLGAAGPRKPGAARKARKGARYVDVMGEVKGWRGGEEWVRLG.

2 stretches are compositionally biased toward polar residues: residues 1–10 (MVSDAPNSSW) and 41–51 (EDNTTQSNTAG). 5 disordered regions span residues 1-166 (MVSD…TVSP), 193-820 (EIEE…PREA), 1301-1339 (FVSG…PSAS), 1355-1665 (SSLP…AKLG), and 1681-1842 (NKNA…ARKG). Low complexity predominate over residues 85 to 99 (SAPDTETPEQTGPAE). The segment covering 114–123 (KHLSTMSFTR) has biased composition (polar residues). Residues 213-225 (ATQNAQDDTTTQQ) are compositionally biased toward low complexity. The segment covering 252 to 262 (SADQDATQEGQ) has biased composition (polar residues). The segment covering 270 to 281 (FAEETVGEEDDF) has biased composition (acidic residues). Basic and acidic residues predominate over residues 344–359 (KAQEGENLDEKWKEMF). Composition is skewed to acidic residues over residues 360-369 (GDDDAEEGFL) and 387-400 (SDDE…ETEQ). Over residues 469–483 (TAAPYAPPSTAPPAP) the composition is skewed to pro residues. Positions 498 to 510 (EKNKAQSFVDKKG) are enriched in basic and acidic residues. Low complexity-rich tracts occupy residues 553–585 (SASM…APSS) and 613–632 (KSAA…SRYS). Positions 683–697 (LAERRSSSSLHDHRL) are enriched in basic and acidic residues. Over residues 724–733 (GPAPPHPMSP) the composition is skewed to pro residues. Residues 744 to 760 (GARQTPPHTAPSGQTVL) are compositionally biased toward polar residues. Residues 773–784 (LAPPYDFAPPPR) are compositionally biased toward pro residues. The segment covering 1309-1318 (SGQGPTGEGE) has biased composition (gly residues). Over residues 1330 to 1339 (PTISRSPSAS) the composition is skewed to polar residues. Low complexity predominate over residues 1362 to 1377 (VPASAPATRAASRYAP). Polar residues-rich tracts occupy residues 1382-1393 (ATGSNSRPSTSA) and 1442-1474 (TPQS…TSAP). Low complexity predominate over residues 1539–1557 (SYEAPSYQPYSYEPPSYEP). Residues 1594-1625 (PAEKSRAEKDRENDEMFRKAAEEDAQRVEAAK) are compositionally biased toward basic and acidic residues. Low complexity-rich tracts occupy residues 1701–1710 (GAPRSVSASP) and 1735–1760 (PPRS…SPGS). A compositionally biased stretch (gly residues) spans 1790–1803 (LGGGGSGVGGGGGG). Residues 1811-1833 (PPTSLSNSSSIDDLLGAAGPRKP) are compositionally biased toward low complexity.

Belongs to the SEC16 family.

The protein localises to the endoplasmic reticulum membrane. In terms of biological role, involved in the initiation of assembly of the COPII coat required for the formation of transport vesicles from the endoplasmic reticulum (ER) and the selection of cargo molecules. Also involved in autophagy. In Chaetomium globosum (strain ATCC 6205 / CBS 148.51 / DSM 1962 / NBRC 6347 / NRRL 1970) (Soil fungus), this protein is COPII coat assembly protein SEC16 (SEC16).